Reading from the N-terminus, the 90-residue chain is Probable Fe(2+)-trafficking protein (90 aa).

This sequence belongs to the Fe(2+)-trafficking protein family. As to quaternary structure, monomer.

Functionally, could be a mediator in iron transactions between iron acquisition and iron-requiring processes, such as synthesis and/or repair of Fe-S clusters in biosynthetic enzymes. This is Probable Fe(2+)-trafficking protein from Edwardsiella ictaluri (strain 93-146).